Here is a 505-residue protein sequence, read N- to C-terminus: Lysine--tRNA ligase (505 aa).

Residues Glu-415 and Glu-422 each coordinate Mg(2+).

This sequence belongs to the class-II aminoacyl-tRNA synthetase family. In terms of assembly, homodimer. Mg(2+) serves as cofactor.

Its subcellular location is the cytoplasm. The enzyme catalyses tRNA(Lys) + L-lysine + ATP = L-lysyl-tRNA(Lys) + AMP + diphosphate. The sequence is that of Lysine--tRNA ligase from Vibrio parahaemolyticus serotype O3:K6 (strain RIMD 2210633).